A 486-amino-acid chain; its full sequence is Receptor-interacting serine/threonine-protein kinase 3 (486 aa).

The residue at position 2 (Ser-2) is a Phosphoserine. Residues 22–292 (LKKLEFVGKG…DCEPKTNEVY (271 aa)) form the Protein kinase domain. ATP contacts are provided by residues 28–36 (VGKGGFGVV) and Lys-51. The Proton acceptor role is filled by Asp-143. At Ser-165 the chain carries Phosphoserine. Position 187 is a phosphothreonine (Thr-187). At Ser-204 the chain carries Phosphoserine; by autocatalysis. Thr-231 carries the phosphothreonine; by autocatalysis modification. Ser-232 bears the Phosphoserine; by autocatalysis mark. Thr-257 carries the post-translational modification Phosphothreonine. 2 positions are modified to phosphoserine: Ser-304 and Ser-326. A disordered region spans residues 312–333 (QHRSSGRNLSAREPSQRGTEMD). Phosphothreonine is present on Thr-338. Residues 349 to 388 (LEEPSGPVPGKCPERQAQDTSVGPATPARTSSDPVAGTPQ) are disordered. Ser-353, Ser-369, and Ser-380 each carry phosphoserine. Polar residues predominate over residues 366–381 (QDTSVGPATPARTSSD). Thr-392 is subject to Phosphothreonine. The RIP homotypic interaction motif (RHIM) signature appears at 440-461 (LVFNNCSEVQIGNYNSLVAPPR). A disordered region spans residues 462 to 486 (TTASSSAKYDQAQFGRGRGWQPFHK). At Arg-477 the chain carries Omega-N-methylarginine.

The protein belongs to the protein kinase superfamily. TKL Ser/Thr protein kinase family. In terms of assembly, interacts (via RIP homotypic interaction motif) with RIPK1 (via RIP homotypic interaction motif); this interaction induces RIPK1 phosphorylation and formation of a RIPK1-RIPK3 necrosis-inducing complex. Interacts with MLKL; the interaction is direct and triggers necroptosis. Interacts with ZBP1 (via RIP homotypic interaction motif); interaction with ZBP1 activates RIPK3, triggering necroptosis. Upon TNF-induced necrosis, the RIPK1-RIPK3 dimer further interacts with PGAM5 and MLKL; the formation of this complex leads to PGAM5 phosphorylation and increase in PGAM5 phosphatase activity. Binds TRAF2 and is recruited to the TNFR-1 signaling complex. Interacts with PYGL, GLUL and GLUD1; these interactions result in activation of these metabolic enzymes. Interacts with BIRC2/c-IAP1, BIRC3/c-IAP2 and XIAP/BIRC4. Interacts with ARHGEF2. Interacts with PELI1 (via atypical FHA domain); the phosphorylated form at Thr-187 binds preferentially to PELI1. Interacts with BUB1B, TRAF2 and STUB1. Interacts with CASP6. Component of the AIM2 PANoptosome complex, a multiprotein complex that drives inflammatory cell death (PANoptosis). (Microbial infection) Interacts (via RIP homotypic interaction motif) with murid herpesvirus protein RIR1; this interaction disrupts RIP3-RIP1 interactions characteristic of TNF-alpha induced necroptosis, thereby suppressing this death pathway. Post-translationally, RIPK1 and RIPK3 undergo reciprocal auto- and trans-phosphorylation. Autophosphorylated following interaction with ZBP1. Phosphorylation of Ser-204 plays a role in the necroptotic function of RIPK3. Autophosphorylates at Thr-231 and Ser-232 following activation by ZBP1: phosphorylation at these sites is a hallmark of necroptosis and is required for binding MLKL. Phosphorylation at Thr-187 is important for its kinase activity, interaction with PELI1 and for its ability to mediate TNF-induced necroptosis. Polyubiquitinated with 'Lys-48' and 'Lys-63'-linked chains by BIRC2/c-IAP1 and BIRC3/c-IAP2, leading to activation of NF-kappa-B. Ubiquitinated by STUB1 leading to its subsequent proteasome-dependent degradation. In terms of tissue distribution, expressed in embryo and in adult spleen, liver, testis, heart, brain and lung.

It is found in the cytoplasm. Its subcellular location is the cytosol. The protein localises to the nucleus. It catalyses the reaction L-seryl-[protein] + ATP = O-phospho-L-seryl-[protein] + ADP + H(+). The catalysed reaction is L-threonyl-[protein] + ATP = O-phospho-L-threonyl-[protein] + ADP + H(+). Activity is stimulated by ZBP1, which senses double-stranded Z-RNA structures. RIPK3-dependent necroptosis is inhibited by RIPK1: RIPK1 prevents the ZBP1-induced activation of RIPK3 via FADD-mediated recruitment of CASP8, which cleaves RIPK1 and limits TNF-induced necroptosis. Inhibited by type II inhibitor 1-(4-fluorophenyl)-N-[3-fluoro-4-(1H-pyrrolo[2,3-b]pyridin-4-yloxy)phenyl]-2-oxo-1,2-dihydropyridine-3-carboxamide. Serine/threonine-protein kinase that activates necroptosis and apoptosis, two parallel forms of cell death. Necroptosis, a programmed cell death process in response to death-inducing TNF-alpha family members, is triggered by RIPK3 following activation by ZBP1. Activated RIPK3 forms a necrosis-inducing complex and mediates phosphorylation of MLKL, promoting MLKL localization to the plasma membrane and execution of programmed necrosis characterized by calcium influx and plasma membrane damage. In addition to TNF-induced necroptosis, necroptosis can also take place in the nucleus in response to orthomyxoviruses infection: following ZBP1 activation, which senses double-stranded Z-RNA structures, nuclear RIPK3 catalyzes phosphorylation and activation of MLKL, promoting disruption of the nuclear envelope and leakage of cellular DNA into the cytosol. Also regulates apoptosis: apoptosis depends on RIPK1, FADD and CASP8, and is independent of MLKL and RIPK3 kinase activity. Phosphorylates RIPK1: RIPK1 and RIPK3 undergo reciprocal auto- and trans-phosphorylation. In some cell types, also able to restrict viral replication by promoting cell death-independent responses. In response to flavivirus infection in neurons, promotes a cell death-independent pathway that restricts viral replication: together with ZBP1, promotes a death-independent transcriptional program that modifies the cellular metabolism via up-regulation expression of the enzyme ACOD1/IRG1 and production of the metabolite itaconate. Itaconate inhibits the activity of succinate dehydrogenase, generating a metabolic state in neurons that suppresses replication of viral genomes. RIPK3 binds to and enhances the activity of three metabolic enzymes: GLUL, GLUD1, and PYGL. These metabolic enzymes may eventually stimulate the tricarboxylic acid cycle and oxidative phosphorylation, which could result in enhanced ROS production. The chain is Receptor-interacting serine/threonine-protein kinase 3 from Mus musculus (Mouse).